The chain runs to 901 residues: HTH-type transcriptional regulator MalT (901 aa).

Position 39 to 46 (39 to 46) interacts with ATP; that stretch reads SPAGYGKT. An HTH luxR-type domain is found at 829–894; sequence ELIRTSPLTQ…DAVQHAQQLL (66 aa). Residues 853–872 constitute a DNA-binding region (H-T-H motif); the sequence is NEQIAGELEVAATTIKTHIR.

This sequence belongs to the MalT family. As to quaternary structure, monomer in solution. Oligomerizes to an active state in the presence of the positive effectors ATP and maltotriose.

Its activity is regulated as follows. Activated by ATP and maltotriose, which are both required for DNA binding. Functionally, positively regulates the transcription of the maltose regulon whose gene products are responsible for uptake and catabolism of malto-oligosaccharides. Specifically binds to the promoter region of its target genes, recognizing a short DNA motif called the MalT box. The protein is HTH-type transcriptional regulator MalT of Escherichia fergusonii (strain ATCC 35469 / DSM 13698 / CCUG 18766 / IAM 14443 / JCM 21226 / LMG 7866 / NBRC 102419 / NCTC 12128 / CDC 0568-73).